Reading from the N-terminus, the 316-residue chain is Melanocyte-stimulating hormone receptor (316 aa).

Residues 1-37 (MAVQGSQRRLLGSLNSTPTAIPQLGLAANQTGARCLE) lie on the Extracellular side of the membrane. An N-linked (GlcNAc...) asparagine glycan is attached at Asn-29. A helical membrane pass occupies residues 38 to 63 (VSIPDGLFLSLGLVSLVENVLVVATI). Topologically, residues 64-72 (AKNRNLHSP) are cytoplasmic. A helical transmembrane segment spans residues 73-93 (MYCFICCLALSDLLVSGSNVV). The Extracellular segment spans residues 94 to 117 (DTLLLLLEAGALAARAAVLQQLDN). A helical transmembrane segment spans residues 118 to 139 (VIDVITCSSMLSSLCFLGAIAV). The Cytoplasmic segment spans residues 140 to 162 (DRYISIFYALRYRSIVTLPRARR). A helical membrane pass occupies residues 163-182 (AVAAIWVASVLFSTLFIAYY). The Extracellular segment spans residues 183–190 (DHTAVLLC). Residues 191–210 (LVVFFLAMLVLMAVLYVHML) form a helical membrane-spanning segment. At 211–239 (ARACQHAQGIARLHKRQRPVHKGFGLKGP) the chain is on the cytoplasmic side. A helical transmembrane segment spans residues 240–265 (VTLTILLGIFFLCWGPFFLHLTLIVL). Topologically, residues 266 to 278 (CPEHPTCGCIFKN) are extracellular. The chain crosses the membrane as a helical span at residues 279-299 (FNLFLALIICNAIIDPLIYAF). Over 300 to 316 (HSQELRRTLKEVLTCSW) the chain is Cytoplasmic. A lipid anchor (S-palmitoyl cysteine) is attached at Cys-314.

It belongs to the G-protein coupled receptor 1 family. Interacts with MGRN1, but does not undergo MGRN1-mediated ubiquitination; this interaction competes with GNAS-binding and thus inhibits agonist-induced cAMP production. Interacts with OPN3; the interaction results in a decrease in MC1R-mediated cAMP signaling and ultimately a decrease in melanin production in melanocytes.

The protein resides in the cell membrane. Receptor for MSH (alpha, beta and gamma) and ACTH. The activity of this receptor is mediated by G proteins which activate adenylate cyclase. Mediates melanogenesis, the production of eumelanin (black/brown) and phaeomelanin (red/yellow), via regulation of cAMP signaling in melanocytes. This is Melanocyte-stimulating hormone receptor (MC1R) from Gorilla gorilla gorilla (Western lowland gorilla).